Here is a 647-residue protein sequence, read N- to C-terminus: Probable potassium transport system protein Kup (647 aa).

The next 13 helical transmembrane spans lie at 32–52 (IALMFAAIGIVFGDIGTSPLY), 74–94 (VISMVFWAFAIVVSLKYVLFV), 124–144 (LLIIMAGVFGACMFYGDAIIT), 166–186 (FVLPITVLILVILFFIQKTGT), 193–213 (FGPIMMVWFITIGLMGLHQVI), 230–250 (FLIEHSLQGFIVLGAVFLVLT), 271–291 (WFFIVMPCLLLNYFGQGAMFL), 300–320 (PFFLMVPEVFVFPLVILATAA), 322–342 (VIASQAVISGAFSMTSQAILL), 361–381 (IYMPFVNWTLLFLVIVVVLAF), 390–410 (AYGIAVTTTMIVTTLLAAIVM), 418–438 (TILVTLVIGAFLTVDLAFLTA), and 443–463 (IMEGGWFPLLLGAICFLFLMT).

It belongs to the HAK/KUP transporter (TC 2.A.72) family.

It is found in the cell inner membrane. The enzyme catalyses K(+)(in) + H(+)(in) = K(+)(out) + H(+)(out). Its function is as follows. Transport of potassium into the cell. Likely operates as a K(+):H(+) symporter. This Polynucleobacter asymbioticus (strain DSM 18221 / CIP 109841 / QLW-P1DMWA-1) (Polynucleobacter necessarius subsp. asymbioticus) protein is Probable potassium transport system protein Kup.